The sequence spans 697 residues: U-box domain-containing protein 18 (697 aa).

The segment at 23–210 is U-box N-terminal domain (UND) required for EXO70B1 binding and crucial for the negative regulation of ABA-dependent stomatal movement; sequence SISIVTLLDS…INRILDHVGI (188 aa). In terms of domain architecture, U-box spans 287–361; the sequence is LKVEDLLCPI…RKHCKTNGIV (75 aa). ARM repeat units lie at residues 420 to 459, 461 to 500, 502 to 544, 546 to 587, 589 to 631, and 657 to 696; these read SFNR…NLSK, VTGK…YLSS, EDYS…GLLM, SDNH…KLAE, PDGT…NLCL, and NGEY…FVHA.

As to quaternary structure, interacts with EXO70B1 via its U-box N-terminal domain (UND).

Its subcellular location is the endomembrane system. It carries out the reaction S-ubiquitinyl-[E2 ubiquitin-conjugating enzyme]-L-cysteine + [acceptor protein]-L-lysine = [E2 ubiquitin-conjugating enzyme]-L-cysteine + N(6)-ubiquitinyl-[acceptor protein]-L-lysine.. It participates in protein modification; protein ubiquitination. In terms of biological role, functions as an E3 ubiquitin ligase. Mediates EXO70B1 ubiquitination. Involved in the regulation of abscisic acid (ABA)-mediated stomatal movements. This is U-box domain-containing protein 18 from Arabidopsis thaliana (Mouse-ear cress).